The primary structure comprises 512 residues: Kelch repeat protein C2 (512 aa).

The 66-residue stretch at 2–67 folds into the BTB domain; it reads ESVIFSINGE…MRWKKINITV (66 aa). Residues 102-176 enclose the BACK domain; it reads CIRMFNFSKR…LLKWIHKNPN (75 aa). Kelch repeat units follow at residues 216-261, 262-307, 309-354, 356-403, 405-449, and 452-498; these read IKHN…LYNC, LYII…VNDG, LYVI…FVND, IYVM…EYDG, IYAI…SCGD, and LIIA…THKS.

Belongs to the poxviruses Kelch family.

The sequence is that of Kelch repeat protein C2 from Camelus.